The following is a 696-amino-acid chain: PWWP domain-containing DNA repair factor 3B (696 aa).

Composition is skewed to polar residues over residues 119-128 (QNVPQKQSDS) and 290-300 (CLDTSQNQPSM). Disordered regions lie at residues 119-143 (QNVP…DLPG) and 278-303 (NIED…MESE). Ser-128 bears the Phosphoserine mark. Positions 392-453 (TGMIVWFKYQ…KKFDCKEKQM (62 aa)) constitute a PWWP domain.

The protein belongs to the PWWP3A family.

This chain is PWWP domain-containing DNA repair factor 3B, found in Homo sapiens (Human).